Consider the following 267-residue polypeptide: Nus factor SuhB (267 aa).

The Mg(2+) site is built by glutamate 67, aspartate 84, and leucine 86. Residue glutamate 67 participates in substrate binding. Residues 86–89, arginine 183, and aspartate 212 each bind substrate; that span reads LDGT.

It belongs to the inositol monophosphatase superfamily. In terms of assembly, homodimer. The rRNA transcription and antitermination complex (rrnTAC) consists of RNA polymerase (RNAP), NusA, NusB, NusE (rpsJ), NusG, SubB, ribosomal protein S4, DNA and precursor rRNA; S4 is more flexible than other subunits. Mg(2+) serves as cofactor.

Its subcellular location is the cytoplasm. It catalyses the reaction a myo-inositol phosphate + H2O = myo-inositol + phosphate. Part of the processive rRNA transcription and antitermination complex (rrnTAC). The complex forms an RNA-chaperone ring around the RNA exit tunnel of RNA polymerase (RNAP). It supports rapid transcription and antitermination of rRNA operons, cotranscriptional rRNA folding, and annealing of distal rRNA regions to allow correct ribosome biogenesis. This subunit may play a central role in organizing the structure. The protein is Nus factor SuhB of Vibrio cholerae serotype O1 (strain ATCC 39315 / El Tor Inaba N16961).